The sequence spans 255 residues: Hydroxyacylglutathione hydrolase (255 aa).

Residues H56, H58, D60, H61, H114, D133, and H171 each coordinate Zn(2+).

It belongs to the metallo-beta-lactamase superfamily. Glyoxalase II family. Monomer. It depends on Zn(2+) as a cofactor.

The enzyme catalyses an S-(2-hydroxyacyl)glutathione + H2O = a 2-hydroxy carboxylate + glutathione + H(+). The protein operates within secondary metabolite metabolism; methylglyoxal degradation; (R)-lactate from methylglyoxal: step 2/2. Its function is as follows. Thiolesterase that catalyzes the hydrolysis of S-D-lactoyl-glutathione to form glutathione and D-lactic acid. This Chelativorans sp. (strain BNC1) protein is Hydroxyacylglutathione hydrolase.